Consider the following 97-residue polypeptide: Large ribosomal subunit protein bL27 (97 aa).

The interval 14-36 (HKKGGGSTSNGRDSQAKRLGAKA) is disordered.

It belongs to the bacterial ribosomal protein bL27 family.

This chain is Large ribosomal subunit protein bL27, found in Streptococcus sanguinis (strain SK36).